A 339-amino-acid polypeptide reads, in one-letter code: Fructose-1,6-bisphosphatase class 1 (339 aa).

4 residues coordinate Mg(2+): E101, D120, L122, and D123. Substrate is bound by residues 123-126 (DGSS), N215, and K281. E287 contributes to the Mg(2+) binding site.

Belongs to the FBPase class 1 family. Homotetramer. The cofactor is Mg(2+).

It is found in the cytoplasm. It catalyses the reaction beta-D-fructose 1,6-bisphosphate + H2O = beta-D-fructose 6-phosphate + phosphate. It functions in the pathway carbohydrate biosynthesis; gluconeogenesis. The sequence is that of Fructose-1,6-bisphosphatase class 1 from Polynucleobacter necessarius subsp. necessarius (strain STIR1).